We begin with the raw amino-acid sequence, 266 residues long: Ribosomal RNA small subunit methyltransferase J (266 aa).

S-adenosyl-L-methionine is bound by residues 109–110 (RD), 125–126 (ER), and Asp-185.

Belongs to the methyltransferase superfamily. RsmJ family.

It is found in the cytoplasm. It carries out the reaction guanosine(1516) in 16S rRNA + S-adenosyl-L-methionine = N(2)-methylguanosine(1516) in 16S rRNA + S-adenosyl-L-homocysteine + H(+). Functionally, specifically methylates the guanosine in position 1516 of 16S rRNA. This Cellvibrio japonicus (strain Ueda107) (Pseudomonas fluorescens subsp. cellulosa) protein is Ribosomal RNA small subunit methyltransferase J.